Consider the following 406-residue polypeptide: Tryptophan synthase beta chain (406 aa).

K99 is subject to N6-(pyridoxal phosphate)lysine.

Belongs to the TrpB family. As to quaternary structure, tetramer of two alpha and two beta chains. Requires pyridoxal 5'-phosphate as cofactor.

It carries out the reaction (1S,2R)-1-C-(indol-3-yl)glycerol 3-phosphate + L-serine = D-glyceraldehyde 3-phosphate + L-tryptophan + H2O. It functions in the pathway amino-acid biosynthesis; L-tryptophan biosynthesis; L-tryptophan from chorismate: step 5/5. Its function is as follows. The beta subunit is responsible for the synthesis of L-tryptophan from indole and L-serine. The protein is Tryptophan synthase beta chain of Allorhizobium ampelinum (strain ATCC BAA-846 / DSM 112012 / S4) (Agrobacterium vitis (strain S4)).